The sequence spans 733 residues: Tyrosine-protein kinase ptk (733 aa).

The next 2 helical transmembrane spans lie at 19-39 (LFFS…LSLI) and 438-458 (LQIL…LALL). 542 to 550 (GPAPEVGKS) serves as a coordination point for ATP.

Belongs to the etk/wzc family. It depends on Mg(2+) as a cofactor. Mn(2+) is required as a cofactor. Post-translationally, autophosphorylated on several Tyr residues. Dephosphorylated by ptp.

It localises to the cell inner membrane. The enzyme catalyses L-tyrosyl-[protein] + ATP = O-phospho-L-tyrosyl-[protein] + ADP + H(+). It participates in glycan metabolism; exopolysaccharide biosynthesis. Functionally, may be involved in the production and the transport of exopolysaccharides. The polypeptide is Tyrosine-protein kinase ptk (ptk) (Acinetobacter johnsonii).